The following is an 87-amino-acid chain: HssA/B-like protein 31 (87 aa).

Belongs to the hssA/B family.

This is HssA/B-like protein 31 (hssl31) from Dictyostelium discoideum (Social amoeba).